The following is a 1741-amino-acid chain: Meiosis regulator and mRNA stability factor 1 (1741 aa).

One can recognise an NYN domain in the interval 345 to 482; sequence IGVFWDIENC…ALLHHAHELV (138 aa). Disordered regions lie at residues 594–636, 659–678, and 683–716; these read KVKS…GSVI, TENH…SHAA, and LTTK…PVDK. The span at 659-668 shows a compositional bias: basic and acidic residues; that stretch reads TENHQEHLRE. The 80-residue stretch at 788–867 folds into the RRM domain; it reads ADIQISNIDY…KRIQVSLATG (80 aa). HTH OST-type domains follow at residues 872–946, 1000–1076, 1097–1171, 1173–1248, 1257–1332, 1333–1408, 1409–1483, and 1484–1558; these read SLSL…SPLG, SLKT…HNKP, QLIQ…LTHR, QVKR…IPKR, RTKQ…TEVE, QVKA…INRK, SLRT…VRLT, and NLYM…LKND. A compositionally biased stretch (polar residues) spans 1684 to 1700; the sequence is KLTSGSVASSTAENTSV. The interval 1684-1727 is disordered; that stretch reads KLTSGSVASSTAENTSVPPRHSSETQLNKEAMDSPAKKQHKNKV.

The protein resides in the peroxisome. Its function is as follows. Essential regulator of oogenesis required for female meiotic progression to repress transposable elements and preventing their mobilization, which is essential for the germline integrity. This chain is Meiosis regulator and mRNA stability factor 1, found in Gallus gallus (Chicken).